A 211-amino-acid polypeptide reads, in one-letter code: Adenylyl-sulfate kinase (211 aa).

An ATP-binding site is contributed by 36 to 43 (GLSGSGKS). Residue S110 is the Phosphoserine intermediate of the active site.

Belongs to the APS kinase family.

It carries out the reaction adenosine 5'-phosphosulfate + ATP = 3'-phosphoadenylyl sulfate + ADP + H(+). The protein operates within sulfur metabolism; hydrogen sulfide biosynthesis; sulfite from sulfate: step 2/3. Functionally, catalyzes the synthesis of activated sulfate. The polypeptide is Adenylyl-sulfate kinase (cysC) (Buchnera aphidicola subsp. Schizaphis graminum (strain Sg)).